The primary structure comprises 344 residues: Succinylglutamate desuccinylase (344 aa).

3 residues coordinate Zn(2+): His-63, Glu-66, and His-160. Residue Glu-224 is part of the active site.

Belongs to the AspA/AstE family. Succinylglutamate desuccinylase subfamily. The cofactor is Zn(2+).

It catalyses the reaction N-succinyl-L-glutamate + H2O = L-glutamate + succinate. Its pathway is amino-acid degradation; L-arginine degradation via AST pathway; L-glutamate and succinate from L-arginine: step 5/5. In terms of biological role, transforms N(2)-succinylglutamate into succinate and glutamate. The sequence is that of Succinylglutamate desuccinylase from Shewanella putrefaciens (strain CN-32 / ATCC BAA-453).